Here is a 268-residue protein sequence, read N- to C-terminus: Thiazole synthase (268 aa).

K100 (schiff-base intermediate with DXP) is an active-site residue. 1-deoxy-D-xylulose 5-phosphate contacts are provided by residues G161, 187 to 188 (AG), and 209 to 210 (NT). Positions 248–268 (ATPSSPSEGMITGSPHSAANN) are disordered.

This sequence belongs to the ThiG family. Homotetramer. Forms heterodimers with either ThiH or ThiS.

The protein localises to the cytoplasm. It carries out the reaction [ThiS sulfur-carrier protein]-C-terminal-Gly-aminoethanethioate + 2-iminoacetate + 1-deoxy-D-xylulose 5-phosphate = [ThiS sulfur-carrier protein]-C-terminal Gly-Gly + 2-[(2R,5Z)-2-carboxy-4-methylthiazol-5(2H)-ylidene]ethyl phosphate + 2 H2O + H(+). It participates in cofactor biosynthesis; thiamine diphosphate biosynthesis. Its function is as follows. Catalyzes the rearrangement of 1-deoxy-D-xylulose 5-phosphate (DXP) to produce the thiazole phosphate moiety of thiamine. Sulfur is provided by the thiocarboxylate moiety of the carrier protein ThiS. In vitro, sulfur can be provided by H(2)S. The sequence is that of Thiazole synthase from Nitrosomonas eutropha (strain DSM 101675 / C91 / Nm57).